A 500-amino-acid chain; its full sequence is E3 ubiquitin-protein ligase TRIM69 (500 aa).

Positions 1–152 (MEVSTNPSSN…SVGQSKEFLQ (152 aa)) are necessary for nuclear localization. Residues 41 to 82 (CPLCNDWFRDPLMLSCGHNFCEACIQDFWRLQAKETFCPECK) form an RING-type zinc finger. Positions 161–255 (TEELAIQQGQ…QCLLAKDMLV (95 aa)) form a coiled coil. The region spanning 305–500 (PIQYMVWREM…KEPLHILHPQ (196 aa)) is the B30.2/SPRY domain. S341 carries the phosphoserine modification.

Belongs to the TRIM/RBCC family. Homo-multimer; required for antiviral activity. Interacts with PML. In terms of processing, phosphorylated. Phosphorylation is necessary for nuclear localization.

Its subcellular location is the cytoplasm. The protein resides in the nucleus. It localises to the nucleus speckle. The protein localises to the cytoskeleton. It is found in the microtubule organizing center. Its subcellular location is the centrosome. It carries out the reaction S-ubiquitinyl-[E2 ubiquitin-conjugating enzyme]-L-cysteine + [acceptor protein]-L-lysine = [E2 ubiquitin-conjugating enzyme]-L-cysteine + N(6)-ubiquitinyl-[acceptor protein]-L-lysine.. It functions in the pathway protein modification; protein ubiquitination. Its function is as follows. E3 ubiquitin ligase that plays an important role in antiviral immunity by restricting different viral infections including dengue virus or vesicular stomatitis indiana virus. Ubiquitinates viral proteins such as dengue virus NS3 thereby limiting infection. In addition, acts as a key mediator of type I interferon induced microtubule stabilization by directly associating to microtubules independently of its E3 ligase activity. Also plays a role in cataract formation together with TP53. Mechanistically, inhibits UVB-induced cell apoptosis and reactive oxygen species (ROS) production by inducing TP53 ubiquitination. Regulates centrosome dynamics and mitotic progression by ubiquitinating STK3/MST2; leading to its redistribution to the perinuclear cytoskeleton and subsequent phosphorylation by PLK1. The chain is E3 ubiquitin-protein ligase TRIM69 (TRIM69) from Homo sapiens (Human).